The primary structure comprises 95 residues: Protein TusB (95 aa).

Belongs to the DsrH/TusB family. As to quaternary structure, heterohexamer, formed by a dimer of trimers. The hexameric TusBCD complex contains 2 copies each of TusB, TusC and TusD. The TusBCD complex interacts with TusE.

Its subcellular location is the cytoplasm. Functionally, part of a sulfur-relay system required for 2-thiolation of 5-methylaminomethyl-2-thiouridine (mnm(5)s(2)U) at tRNA wobble positions. In Escherichia coli O45:K1 (strain S88 / ExPEC), this protein is Protein TusB.